The primary structure comprises 628 residues: E3 SUMO-protein ligase PIAS3 (628 aa).

The interaction with CCAR2 stretch occupies residues 1-200 (MAELGELKHM…QLRFCLCETS (200 aa)). The SAP domain occupies 11–45 (VMSFRVSELQVLLGFAGRNKSGRKHELLAKALHLL). Residues 19–23 (LQVLL) carry the LXXLL motif motif. Residues K46 and K56 each participate in a glycyl lysine isopeptide (Lys-Gly) (interchain with G-Cter in SUMO2) cross-link. Residues 72-95 (PSDLSLLSLPPGTSPVGSPSPLAS) are disordered. Residues 115-280 (MHPPLPQPVH…SLSVYLVRQL (166 aa)) form the PINIT domain. Residues K230 and K307 each participate in a glycyl lysine isopeptide (Lys-Gly) (interchain with G-Cter in SUMO2) cross-link. The SP-RING-type zinc-finger motif lies at 312-393 (PDSEVATTSL…FMEILNSCSD (82 aa)). The Zn(2+) site is built by C343, H345, C366, and C369. The interval 450 to 460 (LTIESSSDEED) is SUMO1-binding. Residues K466 and K482 each participate in a glycyl lysine isopeptide (Lys-Gly) (interchain with G-Cter in SUMO2) cross-link. Residues 573 to 618 (LAPTLGSSHRSATPAPAPGRVSSIVAPGSSLREGHGGPLPSGPSLT) are disordered.

Belongs to the PIAS family. As to quaternary structure, binds SUMO1 and UBE2I. Interacts with AR, BCL11A, GFI1, HMGA2, IRF1, MITF, NCOA2, as well as with STAT3, after treatment with IL6, CNTF or OSM and with STAT5, after PRL stimulation. Interacts with PLAG1. Interacts with ZFHX3. Interacts with MTA1. Interacts with CCAR2 (via N-terminus). Interacts with TRIM8. Interacts with PRDM1. Sumoylated. As to expression, widely expressed, with highest levels in lung, kidney and spleen.

The protein localises to the cytoplasm. It is found in the nucleus. The protein resides in the nucleus speckle. Its pathway is protein modification; protein sumoylation. In terms of biological role, functions as an E3-type small ubiquitin-like modifier (SUMO) ligase, stabilizing the interaction between UBE2I and the substrate, and as a SUMO-tethering factor. Plays a crucial role as a transcriptional coregulation in various cellular pathways, including the STAT pathway and the steroid hormone signaling pathway. The effects of this transcriptional coregulation, transactivation or silencing, may vary depending upon the biological context. Enhances the sumoylation of MTA1 and may participate in its paralog-selective sumoylation. Sumoylates CCAR2 which promotes its interaction with SIRT1. Diminishes the sumoylation of ZFHX3 by preventing the colocalization of ZFHX3 with SUMO1 in the nucleus. The polypeptide is E3 SUMO-protein ligase PIAS3 (Pias3) (Rattus norvegicus (Rat)).